Consider the following 767-residue polypeptide: MFCLLLGSTAPSVGAVPAKKEPQPPPMTPLEKRLLDMGPIREDGSDKFYGMENYGNTCYCNSILQCLYYSVPFREAVINYPTRTPIESLEAALAKSLRYPNPNAQLEAEAQAEKQKAANAQRPGMPPNPQQKPEDKDSPEYKKKMALQTLPLLETQNNASSYGMSESLFTSLKDIFESVVGSQSRIGIIRPQQFLEVLRRDHEMFRTAMHQDAHEFLNLLLNEVVANVEAEASKQPPIEKSLPAPETADSVDQSSSTGSKTPNTTRWVHELFEGLLTSETQCLTCEKVSQRDEVFLDLSVDLEQHSSVTSCLRKFSAEEMLCERNKFHCDNCGGLQEAEKRMKIKRLPRILALHLKRFKYTEDLQRLQKLFHRVVYPYHLRLFNTTDDAEDPDRLYELYAVVVHIGGGPYHGHYVAIIKTEDRGWLLFDDEMVEPVDKNYVKNFFGDKPGLACAYVLFYQETTLEAVLKEQEQENMDSNLAATDANDTILKQNGFPQSPLAHVHSASQIPSHEDNLRPNGLRRAPTAPQLSTHHEHGDPESAPFSPLSPLSPLSQTPPVPPVPERVTTVATPPKNDALAKKERAREEKERKAAEKEREKAEKLRRKEQEARMKENQRREEAELKAALEMSKASKAEEDRRLSHENGKEKQGGSLSRLKRGSKSLSHRLGKDKETRSVSSDLPPVPIPEHSTLSQTGPTSEQQQQQQQQQQQQQSPPNHDQPPNSPQLGKPTIREDEQVNHKDSKHERTGHGKWRSFSLRKKSFSILS.

The USP domain maps to Tyr-49–Thr-462. Cys-58 functions as the Nucleophile in the catalytic mechanism. Disordered regions lie at residues Glu-107–Glu-140 and Ala-232–Asn-263. A compositionally biased stretch (polar residues) spans Ser-250–Asn-263. His-413 functions as the Proton acceptor in the catalytic mechanism. Residues Leu-490–Ser-767 are disordered. Composition is skewed to low complexity over residues Glu-540–Ser-554 and Glu-564–Pro-573. A coiled-coil region spans residues Lys-574 to Leu-641. Residues Ala-577–Gln-650 show a composition bias toward basic and acidic residues. The segment covering Arg-656 to Arg-667 has biased composition (basic residues). Residues Ser-690–Glu-700 are compositionally biased toward polar residues. The segment covering Gln-701–Gln-713 has biased composition (low complexity). A compositionally biased stretch (basic and acidic residues) spans Thr-731–Gly-749. Basic residues predominate over residues His-750–Ser-767.

It belongs to the peptidase C19 family. In terms of assembly, interacts with creA, creC and qutD.

The enzyme catalyses Thiol-dependent hydrolysis of ester, thioester, amide, peptide and isopeptide bonds formed by the C-terminal Gly of ubiquitin (a 76-residue protein attached to proteins as an intracellular targeting signal).. In terms of biological role, ubiquitin thioesterase component of the regulatory network controlling carbon source utilization through ubiquitination and deubiquitination involving creA, creB, creC, creD and acrB. Deubiquitinates the creA catabolic repressor and the quinate permease qutD. Also plays a role in response to carbon starvation and the control of extracellular proteases activity. This chain is Probable ubiquitin carboxyl-terminal hydrolase creB (creB), found in Aspergillus fumigatus (strain CBS 144.89 / FGSC A1163 / CEA10) (Neosartorya fumigata).